The chain runs to 392 residues: Aspartate aminotransferase (392 aa).

L-aspartate contacts are provided by G40, W126, and N176. K239 carries the post-translational modification N6-(pyridoxal phosphate)lysine.

It belongs to the class-I pyridoxal-phosphate-dependent aminotransferase family. Homodimer. Requires pyridoxal 5'-phosphate as cofactor.

The protein localises to the cytoplasm. The catalysed reaction is L-aspartate + 2-oxoglutarate = oxaloacetate + L-glutamate. The chain is Aspartate aminotransferase from Bacillus sp. (strain YM-2).